Reading from the N-terminus, the 574-residue chain is Septation ring formation regulator EzrA (574 aa).

Over 1 to 7 (MSNGLII) the chain is Extracellular. A helical membrane pass occupies residues 8–26 (LIIVIAVALILAYVAAVVL). The Cytoplasmic segment spans residues 27–574 (RKRNETLLDS…YEKTRENIRF (548 aa)). 3 coiled-coil regions span residues 104-141 (LKAK…EAKN), 267-424 (NITQ…QKVN), and 456-524 (ASDH…SIQE).

The protein belongs to the EzrA family.

It localises to the cell membrane. Its function is as follows. Negative regulator of FtsZ ring formation; modulates the frequency and position of FtsZ ring formation. Inhibits FtsZ ring formation at polar sites. Interacts either with FtsZ or with one of its binding partners to promote depolymerization. This is Septation ring formation regulator EzrA from Streptococcus gordonii (strain Challis / ATCC 35105 / BCRC 15272 / CH1 / DL1 / V288).